The following is a 195-amino-acid chain: Phosphoheptose isomerase (195 aa).

Residues 36–195 (VSKVLQSGNT…IVEYNLFKME (160 aa)) enclose the SIS domain. 51 to 53 (NGG) provides a ligand contact to substrate. His-60 and Glu-64 together coordinate Zn(2+). Substrate contacts are provided by residues Glu-64, 95–96 (ND), 121–123 (STS), Ser-126, and Gln-173. 2 residues coordinate Zn(2+): Gln-173 and His-181.

The protein belongs to the SIS family. GmhA subfamily. Zn(2+) serves as cofactor.

It is found in the cytoplasm. The catalysed reaction is 2 D-sedoheptulose 7-phosphate = D-glycero-alpha-D-manno-heptose 7-phosphate + D-glycero-beta-D-manno-heptose 7-phosphate. The protein operates within carbohydrate biosynthesis; D-glycero-D-manno-heptose 7-phosphate biosynthesis; D-glycero-alpha-D-manno-heptose 7-phosphate and D-glycero-beta-D-manno-heptose 7-phosphate from sedoheptulose 7-phosphate: step 1/1. Functionally, catalyzes the isomerization of sedoheptulose 7-phosphate in D-glycero-D-manno-heptose 7-phosphate. The chain is Phosphoheptose isomerase from Leptospira borgpetersenii serovar Hardjo-bovis (strain JB197).